Reading from the N-terminus, the 494-residue chain is MEKKLKSWQGWLLFGGTMVVVFVLGMIAASVNERHAEVTSVMNNKKTEITGIEARNDKFESNYPREYQTWEATADTSFKSLYNGNQAVDVLEARPEMVILWAGYAFSKDYSTPRGHMHAIEDMRNTLRVGAPMTENEGPQPATCWTCKSPDVPRMMQAMGVDNFYKGKWASLGKEIVNPIGCADCHEPENMNLHISRPALIEAFQRQGKDITKATQQEMRSLVCAQCHVEYYFKGDGKYLTFPWDKGSTVEDMEAYYDEAGFADYTHKLSRAPILKAQHPDYEISQMGIHAQRGVSCADCHMPYKSEGGVKYSDHHIQSPLAMIDRTCQVCHRESEETLRNNVYERQNKANEMRNRLETELAKAHVEAKFAWDKGATEDQMKDVLKLIRQAQWRWDFGVASHGGAFHAPQEIQRILGNGLDKAMQARLATAKVLAKLGYTDDVPMPDFSTKEKAQQYIGLDMAAERTAKEKFLNTIVPQWMKEAQENNRLAKNI.

A signal peptide spans 1-31; that stretch reads MEKKLKSWQGWLLFGGTMVVVFVLGMIAASV. His116 provides a ligand contact to heme c. Heme contacts are provided by Cys144, Cys147, and Lys148. Heme c is bound by residues Cys182, Cys185, His186, Cys224, Cys227, and His228. Positions 230, 231, 276, and 278 each coordinate Ca(2+). Tyr231 is a substrate binding site. Residue His279 coordinates substrate. Positions 290, 297, 300, 301, 315, 328, 331, 332, and 407 each coordinate heme c.

This sequence belongs to the cytochrome c-552 family. Requires Ca(2+) as cofactor. The cofactor is heme c.

The protein localises to the periplasm. The catalysed reaction is 6 Fe(III)-[cytochrome c] + NH4(+) + 2 H2O = 6 Fe(II)-[cytochrome c] + nitrite + 8 H(+). It participates in nitrogen metabolism; nitrate reduction (assimilation). In terms of biological role, catalyzes the reduction of nitrite to ammonia, consuming six electrons in the process. In Parabacteroides distasonis (strain ATCC 8503 / DSM 20701 / CIP 104284 / JCM 5825 / NCTC 11152), this protein is Cytochrome c-552.